Reading from the N-terminus, the 121-residue chain is uncharacterized protein (121 aa).

Residues 11–31 (IFQFFVFPFYYFLLIITEIGF) traverse the membrane as a helical segment.

The protein resides in the membrane. This is an uncharacterized protein from Schizosaccharomyces pombe (strain 972 / ATCC 24843) (Fission yeast).